Consider the following 205-residue polypeptide: GTP cyclohydrolase-2 (205 aa).

A GTP-binding site is contributed by arginine 49 to glutamate 53. Zn(2+) contacts are provided by cysteine 54, cysteine 65, and cysteine 67. GTP contacts are provided by residues glutamine 70, glutamate 92–arginine 94, and threonine 114. The active-site Proton acceptor is aspartate 126. The active-site Nucleophile is arginine 128. Residues threonine 149 and lysine 154 each coordinate GTP.

Belongs to the GTP cyclohydrolase II family. Requires Zn(2+) as cofactor.

The catalysed reaction is GTP + 4 H2O = 2,5-diamino-6-hydroxy-4-(5-phosphoribosylamino)-pyrimidine + formate + 2 phosphate + 3 H(+). The protein operates within cofactor biosynthesis; riboflavin biosynthesis; 5-amino-6-(D-ribitylamino)uracil from GTP: step 1/4. Functionally, catalyzes the conversion of GTP to 2,5-diamino-6-ribosylamino-4(3H)-pyrimidinone 5'-phosphate (DARP), formate and pyrophosphate. The chain is GTP cyclohydrolase-2 from Pseudomonas aeruginosa (strain LESB58).